Consider the following 215-residue polypeptide: FMN-dependent NADH:quinone oxidoreductase 1 (215 aa).

It belongs to the azoreductase type 1 family. As to quaternary structure, homodimer. FMN serves as cofactor.

The catalysed reaction is 2 a quinone + NADH + H(+) = 2 a 1,4-benzosemiquinone + NAD(+). It carries out the reaction N,N-dimethyl-1,4-phenylenediamine + anthranilate + 2 NAD(+) = 2-(4-dimethylaminophenyl)diazenylbenzoate + 2 NADH + 2 H(+). In terms of biological role, quinone reductase that provides resistance to thiol-specific stress caused by electrophilic quinones. Also exhibits azoreductase activity. Catalyzes the reductive cleavage of the azo bond in aromatic azo compounds to the corresponding amines. The polypeptide is FMN-dependent NADH:quinone oxidoreductase 1 (Lactiplantibacillus plantarum (strain ATCC BAA-793 / NCIMB 8826 / WCFS1) (Lactobacillus plantarum)).